The following is a 164-amino-acid chain: Transcription elongation factor GreA (164 aa).

Residues 12-38 (RRLERELERLKKERPGVILAIKEAREE) are a coiled coil.

The protein belongs to the GreA/GreB family.

Functionally, necessary for efficient RNA polymerase transcription elongation past template-encoded arresting sites. The arresting sites in DNA have the property of trapping a certain fraction of elongating RNA polymerases that pass through, resulting in locked ternary complexes. Cleavage of the nascent transcript by cleavage factors such as GreA or GreB allows the resumption of elongation from the new 3'terminus. GreA releases sequences of 2 to 3 nucleotides. The polypeptide is Transcription elongation factor GreA (Solidesulfovibrio magneticus (strain ATCC 700980 / DSM 13731 / RS-1) (Desulfovibrio magneticus)).